The sequence spans 465 residues: Cysteine--tRNA ligase (465 aa).

A Zn(2+)-binding site is contributed by C29. The short motif at 31-41 (PTVYNYIHIGN) is the 'HIGH' region element. C209, H234, and E238 together coordinate Zn(2+). Positions 266–270 (KMSKS) match the 'KMSKS' region motif. ATP is bound at residue K269. S270 is modified (phosphoserine).

Belongs to the class-I aminoacyl-tRNA synthetase family. As to quaternary structure, monomer. It depends on Zn(2+) as a cofactor.

Its subcellular location is the cytoplasm. The catalysed reaction is tRNA(Cys) + L-cysteine + ATP = L-cysteinyl-tRNA(Cys) + AMP + diphosphate. In Bacillus cereus (strain ATCC 10987 / NRS 248), this protein is Cysteine--tRNA ligase.